Here is a 503-residue protein sequence, read N- to C-terminus: EZH inhibitory protein (503 aa).

Residues 1 to 16 (MATQSDMEKEQKHQQD) show a composition bias toward basic and acidic residues. 3 disordered regions span residues 1-72 (MATQ…AAAA), 97-462 (HSDR…RSIS), and 483-503 (VPPEEQAEIESTAHPATPPEP). A compositionally biased stretch (low complexity) spans 41-72 (PAASVTTVSSQASPSGGAALSSSTAGSSAAAA). Residues 97-107 (HSDRQDCRSPH) are compositionally biased toward basic and acidic residues. The segment covering 184-197 (YPCSGASTSSQATQ) has biased composition (polar residues). The residue at position 259 (Ser259) is a Phosphoserine. Residues 345–366 (LRSRSTQQRSALLSRRSLSGSA) show a composition bias toward low complexity. The segment at 401–409 (WHAVRMRAS) is sufficient for interaction with EZH2. The interval 403–423 (AVRMRASSPSPPGRFFLPIPQ) is necessary and sufficient for inhibition of PRC2/EED-EZH1 and PRC2/EED-EZH2 complex activity. Positions 428–453 (SSSSSYASNSSSPSRSPGLSPSSPSP) are enriched in low complexity.

In terms of assembly, interacts with PRC2/EED-EZH1 complex member EZH1 and with PRC2/EED-EZH2 complex member EZH2; the interaction blocks EZH1/EZH2 methyltransferase activity. Interacts (via C-terminus) with SUZ12 which is a member of the PRC2/EED-EZH1 and PRC2/EED-EZH2 complexes. As to expression, in testis, detected in male germ cells inside the seminiferous tubules, especially in spermatogonia and round spermatids (at protein level). In the ovary, expressed in primordial follicles and oocytes but not the external follicle cells (at protein level).

The protein resides in the nucleus. It localises to the cytoplasm. Its function is as follows. Inhibits PRC2/EED-EZH1 and PRC2/EED-EZH2 complex function by inhibiting EZH1/EZH2 methyltransferase activity, thereby causing down-regulation of histone H3 trimethylation on 'Lys-27' (H3K27me3). Probably inhibits methyltransferase activity by limiting the stimulatory effect of cofactors such as AEBP2 and JARID2. Inhibits H3K27me3 deposition during spermatogenesis and oogenesis. This is EZH inhibitory protein from Homo sapiens (Human).